We begin with the raw amino-acid sequence, 140 residues long: Ribosome-binding factor A (140 aa).

A disordered region spans residues 121 to 140; it reads KAAEHGREDEELDDTEQDDK. The segment covering 129 to 140 has biased composition (acidic residues); sequence DEELDDTEQDDK.

Belongs to the RbfA family. In terms of assembly, monomer. Binds 30S ribosomal subunits, but not 50S ribosomal subunits or 70S ribosomes.

It localises to the cytoplasm. One of several proteins that assist in the late maturation steps of the functional core of the 30S ribosomal subunit. Associates with free 30S ribosomal subunits (but not with 30S subunits that are part of 70S ribosomes or polysomes). Required for efficient processing of 16S rRNA. May interact with the 5'-terminal helix region of 16S rRNA. The polypeptide is Ribosome-binding factor A (Shewanella loihica (strain ATCC BAA-1088 / PV-4)).